A 463-amino-acid chain; its full sequence is Steroidogenic factor 1 (463 aa).

A DNA-binding region (nuclear receptor) is located at residues 10-85 (DELCPVCGDK…VGMRLEAVRA (76 aa)). An NR C4-type zinc finger spans residues 13-33 (CPVCGDKVSGYHYGLLTCESC). An N6-acetyllysine mark is found at K34, K38, and K72. The NR C4-type zinc finger occupies 49 to 73 (CTESQNCKIDKTQRKRCPYCRFQKC). K119 participates in a covalent cross-link: Glycyl lysine isopeptide (Lys-Gly) (interchain with G-Cter in SUMO). The disordered stretch occupies residues 119-160 (KLETGPSMGPPPQTDYPLAPALHPGAKGLAPAPPAGPPGDYE). Over residues 135-148 (PLAPALHPGAKGLA) the composition is skewed to low complexity. Residue K193 forms a Glycyl lysine isopeptide (Lys-Gly) (interchain with G-Cter in SUMO) linkage. The segment at 197–216 (PEPYASPHEPAPPYGYPEPY) is disordered. S202 is subject to Phosphoserine; by CDK7. A compositionally biased stretch (pro residues) spans 205–216 (EPAPPYGYPEPY). In terms of domain architecture, NR LBD spans 224–461 (GVPELILKLL…NLLIEMLHAK (238 aa)). A 1,2-diacyl-sn-glycero-3-phosphocholine contacts are provided by G343, Y438, and K442.

Belongs to the nuclear hormone receptor family. NR5 subfamily. As to quaternary structure, binds DNA as a monomer. Part of a complex consisting of SFPQ, NONO and NR5A1. Interacts with NR0B2, NCOA2 and PPARGC1A. Interacts with DGKQ and CDK7. Binds to and activated by HIPK3. Acetylation stimulates the transcriptional activity. Post-translationally, sumoylation reduces CDK7-mediated phosphorylation on Ser-202. In terms of processing, phosphorylated on Ser-202 by CDK7. This phosphorylation promotes transcriptional activity. As to expression, expressed in the pre-granulosa and Sertoli cells of the ovary and testis, respectively. In the testis it is also present in the interstitial cells. In the adult ovary it is expressed in the interstitial gland, and in the granulosa cells and theca interna of small to medium-sized antral follicles, but is not expressed in large antral follicles.

The protein resides in the nucleus. Functionally, transcriptional activator. Seems to be essential for sexual differentiation and formation of the primary steroidogenic tissues. Binds to the Ad4 site found in the promoter region of steroidogenic P450 genes such as CYP11A, CYP11B and CYP21B. Also regulates the AMH/Muellerian inhibiting substance gene as well as the AHCH and STAR genes. 5'-YCAAGGYC-3' and 5'-RRAGGTCA-3' are the consensus sequences for the recognition by NR5A1. The SFPQ-NONO-NR5A1 complex binds to the CYP17 promoter and regulates basal and cAMP-dependent transcriptional activity. Binds phosphatidylcholine and phospholipids with a phosphatidylinositol (PI) headgroup, in particular PI(3,4)P2 and PI(3,4,5)P3. Activated by the phosphorylation of NR5A1 by HIPK3 leading to increased steroidogenic gene expression upon cAMP signaling pathway stimulation. This Notamacropus eugenii (Tammar wallaby) protein is Steroidogenic factor 1 (NR5A1).